A 236-amino-acid chain; its full sequence is 2,3,4,5-tetrahydropyridine-2,6-dicarboxylate N-acetyltransferase (236 aa).

The protein belongs to the transferase hexapeptide repeat family. DapH subfamily.

The catalysed reaction is (S)-2,3,4,5-tetrahydrodipicolinate + acetyl-CoA + H2O = L-2-acetamido-6-oxoheptanedioate + CoA. Its pathway is amino-acid biosynthesis; L-lysine biosynthesis via DAP pathway; LL-2,6-diaminopimelate from (S)-tetrahydrodipicolinate (acetylase route): step 1/3. Its function is as follows. Catalyzes the transfer of an acetyl group from acetyl-CoA to tetrahydrodipicolinate. The sequence is that of 2,3,4,5-tetrahydropyridine-2,6-dicarboxylate N-acetyltransferase from Limosilactobacillus reuteri (strain DSM 20016) (Lactobacillus reuteri).